The chain runs to 160 residues: MGVIKKPDLTDPVLRAKLAKGMGHHYYGEPAWPNDLLYMFPVCILGTIACNVGLAVLEPSLIGEPANPFATPLEILPEWYFFPVFQILRVVPNKLLGVLLMASVPVGLITVPFIENVNKFQNPFRRPVATTIFLIGTVVAVWLGIGATLPIDTSLTLGLF.

3 helical membrane passes run 36-56, 95-115, and 131-151; these read LLYMFPVCILGTIACNVGLAV, LLGVLLMASVPVGLITVPFIE, and TIFLIGTVVAVWLGIGATLPI.

It belongs to the cytochrome b family. PetD subfamily. The 4 large subunits of the cytochrome b6-f complex are cytochrome b6, subunit IV (17 kDa polypeptide, petD), cytochrome f and the Rieske protein, while the 4 small subunits are petG, petL, petM and petN. The complex functions as a dimer.

The protein resides in the plastid. It is found in the chloroplast thylakoid membrane. Functionally, component of the cytochrome b6-f complex, which mediates electron transfer between photosystem II (PSII) and photosystem I (PSI), cyclic electron flow around PSI, and state transitions. In Staurastrum punctulatum (Green alga), this protein is Cytochrome b6-f complex subunit 4.